The chain runs to 157 residues: Ribosomal RNA large subunit methyltransferase H (157 aa).

Residues L73, G105, and 124–129 each bind S-adenosyl-L-methionine; that span reads LSKMTF.

This sequence belongs to the RNA methyltransferase RlmH family. In terms of assembly, homodimer.

Its subcellular location is the cytoplasm. The enzyme catalyses pseudouridine(1915) in 23S rRNA + S-adenosyl-L-methionine = N(3)-methylpseudouridine(1915) in 23S rRNA + S-adenosyl-L-homocysteine + H(+). In terms of biological role, specifically methylates the pseudouridine at position 1915 (m3Psi1915) in 23S rRNA. In Parabacteroides distasonis (strain ATCC 8503 / DSM 20701 / CIP 104284 / JCM 5825 / NCTC 11152), this protein is Ribosomal RNA large subunit methyltransferase H.